The sequence spans 443 residues: ATP-dependent protease ATPase subunit HslU (443 aa).

Residues I18, 60-65, D256, E321, and R393 each bind ATP; that span reads GVGKTE.

The protein belongs to the ClpX chaperone family. HslU subfamily. A double ring-shaped homohexamer of HslV is capped on each side by a ring-shaped HslU homohexamer. The assembly of the HslU/HslV complex is dependent on binding of ATP.

It is found in the cytoplasm. Functionally, ATPase subunit of a proteasome-like degradation complex; this subunit has chaperone activity. The binding of ATP and its subsequent hydrolysis by HslU are essential for unfolding of protein substrates subsequently hydrolyzed by HslV. HslU recognizes the N-terminal part of its protein substrates and unfolds these before they are guided to HslV for hydrolysis. This Buchnera aphidicola subsp. Acyrthosiphon pisum (strain 5A) protein is ATP-dependent protease ATPase subunit HslU.